The primary structure comprises 239 residues: Large ribosomal subunit protein uL2 (239 aa).

The tract at residues 200–239 is disordered; the sequence is VNHPHGGKEHHIGRPSTVSRRAPPGRKVGHIAARRTGRRK. A compositionally biased stretch (basic residues) spans 222–239; that stretch reads PPGRKVGHIAARRTGRRK.

This sequence belongs to the universal ribosomal protein uL2 family. In terms of assembly, part of the 50S ribosomal subunit. Forms a bridge to the 30S subunit in the 70S ribosome.

Its function is as follows. One of the primary rRNA binding proteins. Required for association of the 30S and 50S subunits to form the 70S ribosome, for tRNA binding and peptide bond formation. It has been suggested to have peptidyltransferase activity; this is somewhat controversial. Makes several contacts with the 16S rRNA in the 70S ribosome. The chain is Large ribosomal subunit protein uL2 from Thermococcus gammatolerans (strain DSM 15229 / JCM 11827 / EJ3).